Consider the following 670-residue polypeptide: DNA-binding transcriptional activator HyfR (670 aa).

The GAF domain occupies 169-311 (DLDDLIADVA…HIADRIAIAV (143 aa)). Positions 207-221 (CSDLSASHCACLPRC) match the Cys-rich segment, might bind a metal cluster motif. A Sigma-54 factor interaction domain is found at 347-576 (IIYQSQAMED…LENVIERAVL (230 aa)). ATP contacts are provided by residues 375–382 (GETGTGKE) and 438–447 (ADGGTLFLDE). Residues 641–660 (PRGAATRLGMKRTTLLSRMQ) constitute a DNA-binding region (H-T-H motif).

In terms of biological role, a transcriptional activator of its own operon; when overexpressed operon expression is strongly enhanced by low pH (under pH 6.0), strongly inhibited by O(2) but only weakly stimulated by fumarate. Expression in situ is very weak. This chain is DNA-binding transcriptional activator HyfR, found in Escherichia coli (strain K12).